A 343-amino-acid polypeptide reads, in one-letter code: S-adenosylmethionine:tRNA ribosyltransferase-isomerase (343 aa).

The protein belongs to the QueA family. As to quaternary structure, monomer.

Its subcellular location is the cytoplasm. It catalyses the reaction 7-aminomethyl-7-carbaguanosine(34) in tRNA + S-adenosyl-L-methionine = epoxyqueuosine(34) in tRNA + adenine + L-methionine + 2 H(+). Its pathway is tRNA modification; tRNA-queuosine biosynthesis. Functionally, transfers and isomerizes the ribose moiety from AdoMet to the 7-aminomethyl group of 7-deazaguanine (preQ1-tRNA) to give epoxyqueuosine (oQ-tRNA). This Pseudoalteromonas translucida (strain TAC 125) protein is S-adenosylmethionine:tRNA ribosyltransferase-isomerase.